A 267-amino-acid chain; its full sequence is tRNA pseudouridine synthase A (267 aa).

Catalysis depends on Asp-53, which acts as the Nucleophile. Tyr-111 is a binding site for substrate.

This sequence belongs to the tRNA pseudouridine synthase TruA family. As to quaternary structure, homodimer.

The catalysed reaction is uridine(38/39/40) in tRNA = pseudouridine(38/39/40) in tRNA. Functionally, formation of pseudouridine at positions 38, 39 and 40 in the anticodon stem and loop of transfer RNAs. The protein is tRNA pseudouridine synthase A of Alcanivorax borkumensis (strain ATCC 700651 / DSM 11573 / NCIMB 13689 / SK2).